A 230-amino-acid chain; its full sequence is Ribonuclease 3 (230 aa).

The RNase III domain maps to 5 to 134 (EALLKSSFAI…FLGALLLDKG (130 aa)). Glu-47 lines the Mg(2+) pocket. Residue Asp-51 is part of the active site. Mg(2+) is bound by residues Asp-120 and Glu-123. Glu-123 is a catalytic residue. Residues 160–229 (DYKTSLQEIL…AENALKALSE (70 aa)) form the DRBM domain.

Belongs to the ribonuclease III family. Homodimer. The cofactor is Mg(2+).

The protein resides in the cytoplasm. The catalysed reaction is Endonucleolytic cleavage to 5'-phosphomonoester.. Digests double-stranded RNA. Involved in the processing of primary rRNA transcript to yield the immediate precursors to the large and small rRNAs (23S and 16S). Processes some mRNAs, and tRNAs when they are encoded in the rRNA operon. Processes pre-crRNA and tracrRNA of type II CRISPR loci if present in the organism. The protein is Ribonuclease 3 of Streptococcus uberis (strain ATCC BAA-854 / 0140J).